A 512-amino-acid chain; its full sequence is Cytochrome P450 76C2 (512 aa).

Residues I3–F23 traverse the membrane as a helical segment. Position 451 (C451) interacts with heme.

Belongs to the cytochrome P450 family. It depends on heme as a cofactor.

The protein resides in the membrane. This chain is Cytochrome P450 76C2 (CYP76C2), found in Arabidopsis thaliana (Mouse-ear cress).